The following is a 616-amino-acid chain: Chaperone protein HscA homolog (616 aa).

The protein belongs to the heat shock protein 70 family.

Its function is as follows. Probable chaperone. Has a low intrinsic ATPase activity which is markedly stimulated by HscB. The chain is Chaperone protein HscA homolog from Vibrio cholerae serotype O1 (strain ATCC 39315 / El Tor Inaba N16961).